Consider the following 1350-residue polypeptide: Nicotinate hydroxylase hnxS (1350 aa).

Residues cysteine 49, cysteine 54, cysteine 89, cysteine 92, cysteine 133, and cysteine 135 each coordinate [2Fe-2S] cluster. The segment at 164–193 (LVGTEEETESDMGAHSGSGDTGSRSSGSCG) is disordered. Residues 180 to 192 (GSGDTGSRSSGSC) show a composition bias toward low complexity. The FAD-binding PCMH-type domain occupies 256–445 (YGDAEQAWVK…TKIAVPMPSK (190 aa)). FAD contacts are provided by residues 284–291 (LVTGASEV), 379–383 (CLAGN), aspartate 392, and lysine 455. 2 residues coordinate Mo-molybdopterin: glutamine 793 and phenylalanine 824. Residues glutamate 828 and arginine 906 each coordinate substrate. 2 residues coordinate Mo-molybdopterin: arginine 938 and alanine 1107. Glutamate 1281 (proton acceptor) is an active-site residue.

Belongs to the xanthine dehydrogenase family. Requires [2Fe-2S] cluster as cofactor. It depends on FAD as a cofactor. The cofactor is Mo-molybdopterin.

With respect to regulation, allopurinol inhibits catalytic activity in a linear fashion. Functionally, nicotinate hydroxylase, part of the hnx cluster involved in the purine degradation. The nicotinate hydroxylase hnxS accepts nicotinate as a substrate and catalyzes the first step of nicotinate catabolism. HnxS also accepts hypoxanthine, but not xanthine, as a substrate. The major facilitator-type transporters hxnP and hxnZ are probably involved in the uptake of nicotinate-derived metabolites, and the oxidoreductases hxnT and hxnY in the further metabolism of 6-OH nicotinic acid. The chain is Nicotinate hydroxylase hnxS from Emericella nidulans (strain FGSC A4 / ATCC 38163 / CBS 112.46 / NRRL 194 / M139) (Aspergillus nidulans).